The primary structure comprises 465 residues: Iron transporter FTH1 (465 aa).

Residues 1–11 (MAFEDYFSFQI) are Vacuolar-facing. The chain crosses the membrane as a helical span at residues 12–32 (FFIFLRESLEIVVIVSILLTI). Over 33-135 (VKQGLSVEDD…LYQKLKIQIL (103 aa)) the chain is Cytoplasmic. A disordered region spans residues 44 to 66 (PFEGSSSSAGLPSPNTNTNADST). Residues 46 to 66 (EGSSSSAGLPSPNTNTNADST) show a composition bias toward polar residues. The helical transmembrane segment at 136 to 156 (AGGAFGLLLCMLIGGAFVSIF) threads the bilayer. Over 157 to 170 (YHIGTDLWTLSEHY) the chain is Vacuolar. A helical transmembrane segment spans residues 171–191 (YEGVLSLVASVIISVMGLFFL). Topologically, residues 192 to 289 (RMGKLREKFR…FFFRYSSSLS (98 aa)) are cytoplasmic. A helical membrane pass occupies residues 290–310 (LKICLVVATCFLYLIAAGLFS). Residues 311–358 (KGVWQLELQDYVNKCNGQDMSEVGNGPGSYDISRSVWHVNCCNGEKDG) are Vacuolar-facing. A helical membrane pass occupies residues 359–379 (GWMIFTAIFGWTNSATVGSVI). The Cytoplasmic segment spans residues 380 to 465 (SYNAYWLVLI…LIIDSSGSAN (86 aa)). A disordered region spans residues 433–465 (TSELNSSTSEPDSQRRSKDSSVPLIIDSSGSAN). Ser-449 and Ser-453 each carry phosphoserine.

It belongs to the oxidase-dependent Fe transporter (OFeT) (TC 9.A.10.1) family. As to quaternary structure, interacts with FET5.

The protein resides in the vacuole membrane. Functionally, high affinity iron transporter probably involved in transport of intravacuolar stores of iron. In Saccharomyces cerevisiae (strain ATCC 204508 / S288c) (Baker's yeast), this protein is Iron transporter FTH1 (FTH1).